Here is an 84-residue protein sequence, read N- to C-terminus: U4-theraphotoxin-Hhn1a (84 aa).

Positions 1 to 22 (MKVTLIAIPTCAAVLVLHTTAA) are cleaved as a signal peptide. A propeptide spanning residues 23 to 47 (EELEESQLMEVGMPDTELAAVDEER) is cleaved from the precursor. 3 disulfide bridges follow: Cys51-Cys65, Cys55-Cys76, and Cys70-Cys81.

The protein belongs to the neurotoxin 12 (Hwtx-2) family. 02 (Hwtx-2) subfamily. Expressed by the venom gland.

The protein localises to the secreted. Functionally, postsynaptic neurotoxin. The protein is U4-theraphotoxin-Hhn1a of Cyriopagopus hainanus (Chinese bird spider).